A 777-amino-acid chain; its full sequence is DNA repair helicase/translocase XPB-R (777 aa).

One can recognise a Helicase ATP-binding domain in the interval 212-416 (AASDGALRSG…DLFHLVGPKL (205 aa)). Residue 225-232 (LPCGSGKT) participates in ATP binding. The DEVH box motif lies at 369–372 (DEVH). One can recognise a Helicase C-terminal domain in the interval 484 to 631 (IVKRHVAESS…GYTCSVTEFN (148 aa)).

Belongs to the helicase family. RAD25/XPB subfamily.

The enzyme catalyses Couples ATP hydrolysis with the unwinding of duplex DNA by translocating in the 3'-5' direction.. It catalyses the reaction ATP + H2O = ADP + phosphate + H(+). ATP-dependent 3'-5' DNA helicase/translocase; binds dsDNA rather than ssDNA, unzipping it in a translocase rather than classical helicase activity. Involved in nucleotide excision repair (NER) of damaged DNA. XPB-R is a paralog of XBP, but is not a component of the TFIIH basal transcription factor and is dispensable for RNA polymerase II transcription. In Trypanosoma brucei brucei (strain 927/4 GUTat10.1), this protein is DNA repair helicase/translocase XPB-R.